We begin with the raw amino-acid sequence, 211 residues long: Proteasome subunit beta (211 aa).

Residues 1–8 (MNQTLETG) constitute a propeptide, removed in mature form; by autocatalysis. The Nucleophile role is filled by Thr-9.

Belongs to the peptidase T1B family. The 20S proteasome core is composed of 14 alpha and 14 beta subunits that assemble into four stacked heptameric rings, resulting in a barrel-shaped structure. The two inner rings, each composed of seven catalytic beta subunits, are sandwiched by two outer rings, each composed of seven alpha subunits. The catalytic chamber with the active sites is on the inside of the barrel. Has a gated structure, the ends of the cylinder being occluded by the N-termini of the alpha-subunits. Is capped at one or both ends by the proteasome regulatory ATPase, PAN.

It localises to the cytoplasm. The enzyme catalyses Cleavage of peptide bonds with very broad specificity.. With respect to regulation, the formation of the proteasomal ATPase PAN-20S proteasome complex, via the docking of the C-termini of PAN into the intersubunit pockets in the alpha-rings, triggers opening of the gate for substrate entry. Interconversion between the open-gate and close-gate conformations leads to a dynamic regulation of the 20S proteasome proteolysis activity. In terms of biological role, component of the proteasome core, a large protease complex with broad specificity involved in protein degradation. The T.acidophilum proteasome is able to cleave oligopeptides after Tyr, Leu, Phe, and to a lesser extent after Glu and Arg. Thus, displays chymotrypsin-like activity and low level of caspase-like and trypsin-like activities. In Thermoplasma acidophilum (strain ATCC 25905 / DSM 1728 / JCM 9062 / NBRC 15155 / AMRC-C165), this protein is Proteasome subunit beta.